A 216-amino-acid polypeptide reads, in one-letter code: Somatotropin (216 aa).

The first 26 residues, 1–26, serve as a signal peptide directing secretion; it reads MAADSQTSRLLTFTLLCLLWPQEAGA. His45 is a Zn(2+) binding site. A disulfide bridge links Cys78 with Cys189. Residue Ser131 is modified to Phosphoserine. Glu198 is a Zn(2+) binding site. A disulfide bridge connects residues Cys206 and Cys214.

Belongs to the somatotropin/prolactin family.

The protein resides in the secreted. In terms of biological role, plays an important role in growth control. Its major role in stimulating body growth is to stimulate the liver and other tissues to secrete IGF1. It stimulates both the differentiation and proliferation of myoblasts. It also stimulates amino acid uptake and protein synthesis in muscle and other tissues. The sequence is that of Somatotropin (GH1) from Mesocricetus auratus (Golden hamster).